Reading from the N-terminus, the 80-residue chain is Exodeoxyribonuclease 7 small subunit (80 aa).

Belongs to the XseB family. Heterooligomer composed of large and small subunits.

The protein localises to the cytoplasm. The catalysed reaction is Exonucleolytic cleavage in either 5'- to 3'- or 3'- to 5'-direction to yield nucleoside 5'-phosphates.. In terms of biological role, bidirectionally degrades single-stranded DNA into large acid-insoluble oligonucleotides, which are then degraded further into small acid-soluble oligonucleotides. The sequence is that of Exodeoxyribonuclease 7 small subunit from Pseudomonas paraeruginosa (strain DSM 24068 / PA7) (Pseudomonas aeruginosa (strain PA7)).